The sequence spans 417 residues: MIDPEILVNTPDIVRLSQKKRGESQSIVEDALIARRNLRTAINNFETLRAEQNVLSKKIAGSEDSDRPELMRVANLLAERVKNAREEQEKANSEWKKLLFEIPNIVSSEAPYGVEDKCAVMKTVGDIPEFDFEPADHLQLGEQLDAIDVSRGVKVSGTRFYFLKGWGARLELAVMNLALDLALKSGLTLLITPTLVKPEIMLGTGFLGRHEGEVYRLPSGYYLTGTSEVAIAGYHSDEILDISSGPIRYAGWSSCYRREAGSHGRDTRGIMRVHQFSKLEMFSYVHPQQSTRELEHIVSMQEKMLNLLEIPYRVSDIAAEELGTSASRKYDLEAWIPSQNTWREVTSASDCTTFQARRLNVRYRDESGRTGYVATLNGTLATTRFLVAILENHQTSNGSIRVPEALRPLLGQDVIER.

T226–E228 lines the L-serine pocket. ATP-binding positions include R257–E259 and V273. E280 contacts L-serine. Residue E344–S347 coordinates ATP. T379 provides a ligand contact to L-serine.

Belongs to the class-II aminoacyl-tRNA synthetase family. Type-1 seryl-tRNA synthetase subfamily. Homodimer. The tRNA molecule binds across the dimer.

It localises to the cytoplasm. The enzyme catalyses tRNA(Ser) + L-serine + ATP = L-seryl-tRNA(Ser) + AMP + diphosphate + H(+). It carries out the reaction tRNA(Sec) + L-serine + ATP = L-seryl-tRNA(Sec) + AMP + diphosphate + H(+). The protein operates within aminoacyl-tRNA biosynthesis; selenocysteinyl-tRNA(Sec) biosynthesis; L-seryl-tRNA(Sec) from L-serine and tRNA(Sec): step 1/1. Functionally, catalyzes the attachment of serine to tRNA(Ser). Is also able to aminoacylate tRNA(Sec) with serine, to form the misacylated tRNA L-seryl-tRNA(Sec), which will be further converted into selenocysteinyl-tRNA(Sec). This is Serine--tRNA ligase from Tropheryma whipplei (strain Twist) (Whipple's bacillus).